Reading from the N-terminus, the 258-residue chain is Acyl-[acyl-carrier-protein]--UDP-N-acetylglucosamine O-acyltransferase (258 aa).

This sequence belongs to the transferase hexapeptide repeat family. LpxA subfamily. As to quaternary structure, homotrimer.

Its subcellular location is the cytoplasm. It carries out the reaction a (3R)-hydroxyacyl-[ACP] + UDP-N-acetyl-alpha-D-glucosamine = a UDP-3-O-[(3R)-3-hydroxyacyl]-N-acetyl-alpha-D-glucosamine + holo-[ACP]. It participates in glycolipid biosynthesis; lipid IV(A) biosynthesis; lipid IV(A) from (3R)-3-hydroxytetradecanoyl-[acyl-carrier-protein] and UDP-N-acetyl-alpha-D-glucosamine: step 1/6. Its function is as follows. Involved in the biosynthesis of lipid A, a phosphorylated glycolipid that anchors the lipopolysaccharide to the outer membrane of the cell. This is Acyl-[acyl-carrier-protein]--UDP-N-acetylglucosamine O-acyltransferase from Neisseria meningitidis serogroup C / serotype 2a (strain ATCC 700532 / DSM 15464 / FAM18).